The following is a 38-amino-acid chain: MKVRTSVKKLCRNCKIVRRYNVVRVICKSEPKHKQRQG.

This sequence belongs to the bacterial ribosomal protein bL36 family.

This chain is Large ribosomal subunit protein bL36, found in Buchnera aphidicola subsp. Baizongia pistaciae (strain Bp).